Consider the following 107-residue polypeptide: Putative double-stranded DNA mimic protein HS_0995 (107 aa).

The protein belongs to the putative dsDNA mimic protein family.

Functionally, may act as a double-stranded DNA (dsDNA) mimic. Probably regulates the activity of a dsDNA-binding protein. The chain is Putative double-stranded DNA mimic protein HS_0995 from Histophilus somni (strain 129Pt) (Haemophilus somnus).